The primary structure comprises 311 residues: Methionyl-tRNA formyltransferase (311 aa).

110–113 (SLLP) lines the (6S)-5,6,7,8-tetrahydrofolate pocket.

The protein belongs to the Fmt family.

It carries out the reaction L-methionyl-tRNA(fMet) + (6R)-10-formyltetrahydrofolate = N-formyl-L-methionyl-tRNA(fMet) + (6S)-5,6,7,8-tetrahydrofolate + H(+). Functionally, attaches a formyl group to the free amino group of methionyl-tRNA(fMet). The formyl group appears to play a dual role in the initiator identity of N-formylmethionyl-tRNA by promoting its recognition by IF2 and preventing the misappropriation of this tRNA by the elongation apparatus. The sequence is that of Methionyl-tRNA formyltransferase from Streptococcus pyogenes serotype M1.